The primary structure comprises 69 residues: UPF0337 protein DIP1660 (69 aa).

Composition is skewed to basic and acidic residues over residues 1–19 (MSDFENKIEELGGKAKEAV) and 30–41 (DEGRADQTKADV). The segment at 1–42 (MSDFENKIEELGGKAKEAVGEATENEQLADEGRADQTKADVK) is disordered.

The protein belongs to the UPF0337 (CsbD) family.

The sequence is that of UPF0337 protein DIP1660 from Corynebacterium diphtheriae (strain ATCC 700971 / NCTC 13129 / Biotype gravis).